Consider the following 336-residue polypeptide: MKDRYILAFETSCDETSVAVLKNDDELLSNVIASQIESHKRFGGVVPEVASRHHVEVITACIEEALAEAGITEEDVTAVAVTYGPGLVGALLVGLSAAKAFAWAHGLPLIPVNHMAGHLMAAQSVEPLEFPLLALLVSGGHTELVYVSEAGDYKIVGETRDDAVGEAYDKVGRVMGLTYPAGREIDDLAHQGQDIYDFPRAMIKEDNLEFSFSGLKSAFINLHHNAEQKGESLSTEDLCASFQAAVMDILMAKTKKALEKYPVKTLVVAGGVAANKGLRERLAAEITDVKVIIPPLRLCGDNAGMIAYASVSEWNKENFAGWDLNAKPSLAFDTME.

Fe cation-binding residues include His-114 and His-118. Substrate is bound by residues Leu-136–Gly-140, Asp-169, Gly-182, Asp-186, and Asn-275. Asp-301 contacts Fe cation.

It belongs to the KAE1 / TsaD family. The cofactor is Fe(2+).

The protein localises to the cytoplasm. It carries out the reaction L-threonylcarbamoyladenylate + adenosine(37) in tRNA = N(6)-L-threonylcarbamoyladenosine(37) in tRNA + AMP + H(+). Its function is as follows. Required for the formation of a threonylcarbamoyl group on adenosine at position 37 (t(6)A37) in tRNAs that read codons beginning with adenine. Is involved in the transfer of the threonylcarbamoyl moiety of threonylcarbamoyl-AMP (TC-AMP) to the N6 group of A37, together with TsaE and TsaB. TsaD likely plays a direct catalytic role in this reaction. This Streptococcus pneumoniae (strain P1031) protein is tRNA N6-adenosine threonylcarbamoyltransferase.